A 433-amino-acid polypeptide reads, in one-letter code: Forkhead box protein A2-B (433 aa).

The segment at residues 147 to 241 (KPPYSYISLI…ENGCYLRRQK (95 aa)) is a DNA-binding region (fork-head). A compositionally biased stretch (basic and acidic residues) spans 247 to 260 (KKPSLREGGGKKLS). Disordered stretches follow at residues 247 to 337 (KKPS…QSHL) and 407 to 433 (SGLEPSPISSDTSYYQGGYSRPIMNSS). The span at 261–282 (EGASSVGSVGNSSSERSVGNES) shows a compositional bias: low complexity. A compositionally biased stretch (basic and acidic residues) spans 292 to 302 (EQKRSLVDMKS). Over residues 315–331 (ASQAQHLLSQHHSVLSH) the composition is skewed to low complexity. Residues 407–421 (SGLEPSPISSDTSYY) are compositionally biased toward polar residues.

It is found in the nucleus. Its function is as follows. Acts as a transcriptional activator during early development, limiting the extent of mesoderm formation in the gastrula. Binds to DNA via the target sequence 5'-GT[AC]AACA-3', with 5'-GTAAACA-3' being the preferred binding site. The chain is Forkhead box protein A2-B (foxa2-b) from Xenopus laevis (African clawed frog).